Reading from the N-terminus, the 308-residue chain is Ornithine carbamoyltransferase (308 aa).

Carbamoyl phosphate-binding positions include 56-59 (STRT), glutamine 83, arginine 107, and 134-137 (HPCQ). L-ornithine contacts are provided by residues asparagine 165, aspartate 225, and 229 to 230 (SM). Residues 266–267 (CL) and arginine 294 contribute to the carbamoyl phosphate site.

It belongs to the aspartate/ornithine carbamoyltransferase superfamily. OTCase family.

It localises to the cytoplasm. It catalyses the reaction carbamoyl phosphate + L-ornithine = L-citrulline + phosphate + H(+). The protein operates within amino-acid biosynthesis; L-arginine biosynthesis; L-arginine from L-ornithine and carbamoyl phosphate: step 1/3. Reversibly catalyzes the transfer of the carbamoyl group from carbamoyl phosphate (CP) to the N(epsilon) atom of ornithine (ORN) to produce L-citrulline. This is Ornithine carbamoyltransferase from Cereibacter sphaeroides (strain ATCC 17023 / DSM 158 / JCM 6121 / CCUG 31486 / LMG 2827 / NBRC 12203 / NCIMB 8253 / ATH 2.4.1.) (Rhodobacter sphaeroides).